The sequence spans 203 residues: MPIGVPRVPYRLPGEPYSQWISLDDRLYQERILFIGEPIDDNLANTIVGVMLYLNSQDPQKDIVMYINSPGGSVTAGMAIYDTMNHVKPDIVTVCVGQAASMGAFLLAAGTKGKRFALPHSRIMLHQPSLGMIQGQASDIEIRARETLRVKRRMNELLAQMTGQPLEKIERDVERDFYLSATEAQAYGIVDRVIQERSEAMAG.

Ser101 functions as the Nucleophile in the catalytic mechanism. The active site involves His126.

It belongs to the peptidase S14 family. As to quaternary structure, fourteen ClpP subunits assemble into 2 heptameric rings which stack back to back to give a disk-like structure with a central cavity, resembling the structure of eukaryotic proteasomes.

Its subcellular location is the cytoplasm. It catalyses the reaction Hydrolysis of proteins to small peptides in the presence of ATP and magnesium. alpha-casein is the usual test substrate. In the absence of ATP, only oligopeptides shorter than five residues are hydrolyzed (such as succinyl-Leu-Tyr-|-NHMec, and Leu-Tyr-Leu-|-Tyr-Trp, in which cleavage of the -Tyr-|-Leu- and -Tyr-|-Trp bonds also occurs).. In terms of biological role, cleaves peptides in various proteins in a process that requires ATP hydrolysis. Has a chymotrypsin-like activity. Plays a major role in the degradation of misfolded proteins. The sequence is that of ATP-dependent Clp protease proteolytic subunit 1 from Synechococcus sp. (strain JA-3-3Ab) (Cyanobacteria bacterium Yellowstone A-Prime).